Reading from the N-terminus, the 2671-residue chain is Inositol 1,4,5-trisphosphate-gated calcium channel ITPR3 (2671 aa).

Topologically, residues Met1–Thr2202 are cytoplasmic. MIR domains follow at residues Gly113–Asn173, Gly174–Phe224, Glu232–Val288, Gly295–Thr372, and Asp378–Val434. 1D-myo-inositol 1,4,5-trisphosphate contacts are provided by Arg266, Thr268, Leu269, and Arg270. The interval Ser322 to Gly342 is disordered. Positions 503, 507, 510, 567, 568, and 569 each coordinate 1D-myo-inositol 1,4,5-trisphosphate. Arg743 contributes to the Ca(2+) binding site. Phosphoserine occurs at positions 916 and 934. Ca(2+) is bound by residues Glu1122 and Glu1125. Disordered stretches follow at residues Gly1132 to Glu1163 and Asn1809 to Leu1848. Phosphoserine occurs at positions 1813, 1832, and 1834. Residues Glu1882 and Glu1946 each contribute to the Ca(2+) site. The ATP site is built by Ala1996, Glu2149, and Lys2152. The helical transmembrane segment at Leu2203 to Tyr2223 threads the bilayer. Topologically, residues Pro2224–Asp2235 are extracellular. The chain crosses the membrane as a helical span at residues Ser2236–Thr2256. Topologically, residues Lys2257–Leu2264 are cytoplasmic. A helical membrane pass occupies residues Ile2265–Leu2285. Residues Gly2286–Gly2325 lie on the Extracellular side of the membrane. The helical transmembrane segment at Tyr2326 to Phe2346 threads the bilayer. Topologically, residues Asp2347–Ser2368 are cytoplasmic. The helical transmembrane segment at Ile2369 to Leu2389 threads the bilayer. At Phe2390–Tyr2496 the chain is on the extracellular side. Cys2455 and Cys2461 form a disulfide bridge. The helical transmembrane segment at Asp2497–Ile2517 threads the bilayer. The Cytoplasmic portion of the chain corresponds to Asp2518–Arg2671. ATP is bound by residues Cys2538 and Phe2539. Cys2538 lines the Zn(2+) pocket. The Zn(2+) site is built by Cys2541 and His2558. ATP is bound by residues Lys2560, His2563, Asn2564, and Met2565. His2563 provides a ligand contact to Zn(2+). Thr2581 lines the Ca(2+) pocket. Phosphoserine is present on residues Ser2609 and Ser2670.

The protein belongs to the InsP3 receptor family. In terms of assembly, homotetramer. Homodimer. Interacts with TRPC1, TRPC3 and TRPC4. Interacts with TRPV4. Interacts with SIGMAR1. Interacts with PML and AKT1. Interacts with IRAG2 (via coiled-coil domain). Interacts with CABP1. Interacts with TMBIM4/LFG4. Interacts with CEMIP. Interacts with TESPA1. Interacts with TMEM203. Interacts with BOK; regulates ITPR3 expression. Interacts with BCL2L10. Interacts with CHGA and CHGB. Post-translationally, phosphorylated by AKT1 on serine and/or threonine residues. Expressed in intestinal crypt and villus epithelial cells.

It localises to the endoplasmic reticulum membrane. Its subcellular location is the cytoplasmic vesicle. It is found in the secretory vesicle membrane. It carries out the reaction Ca(2+)(in) = Ca(2+)(out). Inositol 1,4,5-trisphosphate-gated calcium channel is regulated by cytosolic calcium in a biphasic manner. At low concentrations, cytosolic calcium binds at a high-affinity juxtamembrane domain (JD) calcium binding site, allowing ITPR3 to activate by escaping a low-energy resting state through an ensemble of preactivated states. At high cytosolic calcium concentrations, ITPR3 preferentially enters an inhibited state stabilized by calcium binding at a second, low-affinity cytoplasmic domain (CD) calcium binding site. Functionally, inositol 1,4,5-trisphosphate-gated calcium channel that, upon 1D-myo-inositol 1,4,5-trisphosphate binding, transports calcium from the endoplasmic reticulum lumen to cytoplasm, thus releasing the intracellular calcium and therefore participates in cellular calcium ion homeostasis. 1D-myo-inositol 1,4,5-trisphosphate binds to the ligand-free channel without altering its global conformation, yielding the low-energy resting state, then progresses through resting-to preactivated transitions to the higher energy preactivated state, which increases affinity for calcium, promoting binding of the low basal cytosolic calcium at the juxtamembrane domain (JD) site, favoring the transition through the ensemble of high-energy intermediate states along the trajectory to the fully-open activated state. Upon opening, releases calcium in the cytosol where it can bind to the low-affinity cytoplasmic domain (CD) site and stabilizes the inhibited state to terminate calcium release. This Homo sapiens (Human) protein is Inositol 1,4,5-trisphosphate-gated calcium channel ITPR3.